Reading from the N-terminus, the 57-residue chain is Alpha-conotoxin-like Sm1.2 (57 aa).

A signal peptide spans 1–16 (MFTVFLLVVLATTVVS). A propeptide spanning residues 17–42 (FPSDRESDGANDEARTDEPEEHGPDR) is cleaved from the precursor. Residues 17–46 (FPSDRESDGANDEARTDEPEEHGPDRNGCC) are disordered. The segment covering 19–41 (SDRESDGANDEARTDEPEEHGPD) has biased composition (basic and acidic residues). Disulfide bonds link Cys-45–Cys-51 and Cys-46–Cys-56. At Cys-56 the chain carries Cysteine amide.

This sequence belongs to the conotoxin A superfamily. As to expression, expressed by the venom duct.

It is found in the secreted. In terms of biological role, alpha-conotoxins act on postsynaptic membranes, they bind to the nicotinic acetylcholine receptors (nAChR) and thus inhibit them. The protein is Alpha-conotoxin-like Sm1.2 of Conus stercusmuscarum (Fly-specked cone).